Consider the following 544-residue polypeptide: Chaperonin GroEL 1 (544 aa).

Residues 30–33 (TLGP), 87–91 (DGTTT), glycine 415, 480–482 (NAA), and aspartate 496 each bind ATP.

This sequence belongs to the chaperonin (HSP60) family. Forms a cylinder of 14 subunits composed of two heptameric rings stacked back-to-back. Interacts with the co-chaperonin GroES.

It localises to the cytoplasm. The catalysed reaction is ATP + H2O + a folded polypeptide = ADP + phosphate + an unfolded polypeptide.. In terms of biological role, together with its co-chaperonin GroES, plays an essential role in assisting protein folding. The GroEL-GroES system forms a nano-cage that allows encapsulation of the non-native substrate proteins and provides a physical environment optimized to promote and accelerate protein folding. The protein is Chaperonin GroEL 1 of Polaromonas naphthalenivorans (strain CJ2).